Consider the following 258-residue polypeptide: GCN5-related N-acetyltransferase 2, chloroplastic (258 aa).

Residues 1-58 (MLLIPISSSSSSSISPPPNSYPSNHHSLFFSNLTFPIQHGSRKLKTLRLRANFWESIR) constitute a chloroplast transit peptide. Positions 107 to 194 (IIFSSGGEID…DHAFNATIWD (88 aa)) are interaction with begomoviruses NSP protein. An N-acetyltransferase domain is found at 107-258 (IIFSSGGEID…GIKGMFWYPK (152 aa)). Acetyl-CoA-binding positions include 195 to 197 (VLV), 203 to 208 (GQGLGK), 231 to 233 (DSQ), and Y238. The Proton donor role is filled by Y238.

It belongs to the acetyltransferase family. GNAT subfamily. In terms of assembly, oligomer. Interacts with begomoviruses NSP but not with CP. This interaction may allow NSP to recruit NSI monomers to acetylate viral genome-bound CP and thus regulate nuclear export of viral genome by NSP. In terms of processing, S-sulfhydrated and activated by hydrogen sulfide H(2)S to promote melatonin accumulation and subsequent melatonin-dependent stomotal closure to combat osmotic stress. Autoacetylated. As to expression, highly expressed in cauline leaves and seeds, at lower levels in stems, siliques, inflorescences and rosettes leaves and at very low levels in roots. Expressed in the xylem parenchyma and phloem of the leaves and root, and in guard cells of young leaves.

Its subcellular location is the plastid. It localises to the chloroplast. The catalysed reaction is 5-methoxytryptamine + acetyl-CoA = melatonin + CoA + H(+). It carries out the reaction L-lysyl-[histone] + acetyl-CoA = N(6)-acetyl-L-lysyl-[histone] + CoA + H(+). It catalyses the reaction L-lysyl-[protein] + acetyl-CoA = N(6)-acetyl-L-lysyl-[protein] + CoA + H(+). The enzyme catalyses serotonin + acetyl-CoA = N-acetylserotonin + CoA + H(+). The catalysed reaction is N-terminal L-alanyl-[protein] + acetyl-CoA = N-terminal N(alpha)-acetyl-L-alanyl-[protein] + CoA + H(+). It carries out the reaction N-terminal L-seryl-[protein] + acetyl-CoA = N-terminal N(alpha)-acetyl-L-seryl-[protein] + CoA + H(+). It catalyses the reaction N-terminal L-valyl-[protein] + acetyl-CoA = N-terminal N(alpha)-acetyl-L-valyl-[protein] + CoA + H(+). The enzyme catalyses N-terminal glycyl-[protein] + acetyl-CoA = N-terminal N(alpha)-acetylglycyl-[protein] + CoA + H(+). The catalysed reaction is an N-terminal L-alpha-aminoacyl-[protein] + acetyl-CoA = N-terminal N(alpha)-acetyl-L-alpha-aminoacyl-[protein] + CoA + H(+). It carries out the reaction N-terminal L-threonyl-[protein] + acetyl-CoA = N-terminal N(alpha)-acetyl-L-threonyl-[protein] + CoA + H(+). It catalyses the reaction N-terminal L-methionyl-[protein] + acetyl-CoA = N-terminal N(alpha)-acetyl-L-methionyl-[protein] + CoA + H(+). The enzyme catalyses N-terminal L-leucyl-[protein] + acetyl-CoA = N-terminal N(alpha)-acetyl-L-leucyl-[protein] + CoA + H(+). Inhibited by the viral nuclear shuttle protein (NSP) that binds to the region required for oligomerization. Functionally, protein acetyltransferase with dual specificity triggering both N-alpha-acetylation (NTA), with a preference for alanine, serine, threonine, methionine and to a lower extent valine as substrates (can also use glycine and leucine), and epsilon-lysine acetylation (KA) of several plastid proteins. Triggers lysine acetylation in KEA1 and KEA2. Acetylates in vitro histones H2A and H3. Does not act as a transcriptional activator but required for the dynamic reorganization of thylakoid protein complexes and grana during photosynthetic state transitions. Involved in melatonin biosynthesis by catalyzing the formation of N-acetylserotonin (NAS) from serotonin and of melatonin (N-acetyl-5-methoxytryptamine) from 5-methoxytryptamine (5-MT). By triggering melatonin biosynthesis, contributes to the chloroplast protein quality control (CPQC), which plays a pivotal role in starch synthesis, and confers melatonin-associated tolerance to high light (HL) stress. Prevents the accumulation of oil and anthocyanin content in mature seeds and avoids seed germination in a melatonin-dependent manner, but promotes mucilage production in the seed coat. Contributes to melatonin-mediated anthocyanin production in cold-exposed seedlings. Implicated in melatonin-monitored circadian dynamics of stomatal aperture to minimize night water loss and promote drought tolerance, partly by triggering hydrogen sulfide H(2)S-dependent stomotal closure in response to osmotic stress. Its function is as follows. (Microbial infection) Required for begomovirus infection and systemic spread. In case of begomoviruses infection, acetylates the capsid protein (CP), but not the nuclear shuttle protein (NSP). Stimulates melatonin-triggered defense responses to the necrotrophic Botrytis cinerea. The chain is GCN5-related N-acetyltransferase 2, chloroplastic from Arabidopsis thaliana (Mouse-ear cress).